Reading from the N-terminus, the 146-residue chain is NADH-quinone oxidoreductase subunit A (146 aa).

Helical transmembrane passes span 8-28 (FGSVFVFLLLGVIFVVGGYLT), 63-83 (FYVVALIFIIFDVEVVFLYPW), and 93-113 (FALIEVLVFAGILILGLAYAW).

It belongs to the complex I subunit 3 family. NDH-1 is composed of 14 different subunits. Subunits NuoA, H, J, K, L, M, N constitute the membrane sector of the complex.

The protein resides in the cell inner membrane. The enzyme catalyses a quinone + NADH + 5 H(+)(in) = a quinol + NAD(+) + 4 H(+)(out). Its function is as follows. NDH-1 shuttles electrons from NADH, via FMN and iron-sulfur (Fe-S) centers, to quinones in the respiratory chain. The immediate electron acceptor for the enzyme in this species is believed to be a menaquinone. Couples the redox reaction to proton translocation (for every two electrons transferred, four hydrogen ions are translocated across the cytoplasmic membrane), and thus conserves the redox energy in a proton gradient. This Chlorobium chlorochromatii (strain CaD3) protein is NADH-quinone oxidoreductase subunit A.